Here is a 234-residue protein sequence, read N- to C-terminus: 2,3-bisphosphoglycerate-dependent phosphoglycerate mutase (234 aa).

Residues 10–17, 23–24, arginine 62, 89–92, lysine 100, 116–117, and 186–187 contribute to the substrate site; these read RHGSSIWN, TG, ERHY, RR, and GN. The active-site Tele-phosphohistidine intermediate is the histidine 11. The active-site Proton donor/acceptor is the glutamate 89.

The protein belongs to the phosphoglycerate mutase family. BPG-dependent PGAM subfamily. As to quaternary structure, homodimer.

The enzyme catalyses (2R)-2-phosphoglycerate = (2R)-3-phosphoglycerate. The protein operates within carbohydrate degradation; glycolysis; pyruvate from D-glyceraldehyde 3-phosphate: step 3/5. In terms of biological role, catalyzes the interconversion of 2-phosphoglycerate and 3-phosphoglycerate. The protein is 2,3-bisphosphoglycerate-dependent phosphoglycerate mutase of Wigglesworthia glossinidia brevipalpis.